The sequence spans 182 residues: Large ribosomal subunit protein bL25 (182 aa).

It belongs to the bacterial ribosomal protein bL25 family. CTC subfamily. In terms of assembly, part of the 50S ribosomal subunit; part of the 5S rRNA/L5/L18/L25 subcomplex. Contacts the 5S rRNA. Binds to the 5S rRNA independently of L5 and L18.

This is one of the proteins that binds to the 5S RNA in the ribosome where it forms part of the central protuberance. The sequence is that of Large ribosomal subunit protein bL25 from Borrelia duttonii (strain Ly).